The following is a 313-amino-acid chain: Carbamate kinase 2 (313 aa).

It belongs to the carbamate kinase family.

It is found in the cytoplasm. The catalysed reaction is hydrogencarbonate + NH4(+) + ATP = carbamoyl phosphate + ADP + H2O + H(+). Its pathway is metabolic intermediate metabolism; carbamoyl phosphate degradation; CO(2) and NH(3) from carbamoyl phosphate: step 1/1. This Staphylococcus aureus (strain bovine RF122 / ET3-1) protein is Carbamate kinase 2 (arcC2).